The primary structure comprises 187 residues: uncharacterized protein (187 aa).

Positions 53 to 187 (RKPHIYSPAD…CLQTSYVVPG (135 aa)) constitute a Tyr recombinase domain. Catalysis depends on residues Arg98 and Lys123.

This sequence belongs to the 'phage' integrase family.

This is an uncharacterized protein from Sinorhizobium fredii (strain NBRC 101917 / NGR234).